The primary structure comprises 215 residues: Large ribosomal subunit protein uL3 (215 aa).

The interval 136-155 (GVSISHRSHGSTGQRQDPGK) is disordered. Q151 is subject to N5-methylglutamine.

It belongs to the universal ribosomal protein uL3 family. As to quaternary structure, part of the 50S ribosomal subunit. Forms a cluster with proteins L14 and L19. Methylated by PrmB.

Its function is as follows. One of the primary rRNA binding proteins, it binds directly near the 3'-end of the 23S rRNA, where it nucleates assembly of the 50S subunit. The chain is Large ribosomal subunit protein uL3 from Rickettsia conorii (strain ATCC VR-613 / Malish 7).